The primary structure comprises 598 residues: MATQPLSTSLVRFLTAAVSESIRRASEAGQLGSLTLEQAAGVAPTIQIPSDPRYGDYACPTPLGMAKLCRMAPAQIAQTLQKHLDLPGIATEVAGGGYLNFRLGDSFLAERLQELLRLGEDFGKTAAPHPERILLEYVSANPTGPLHVGHGRWAAVGSTLANLLRWTGHQVEREFYINDAGNQMRLLGQSLEVRVRQLQGEEVALPEDAYHGSYLVDIARRLLDQVKAGIRPLPTTPEEYTDFAYAEMLAWQKQTLQQLRTEFDHWFSERRLHAPDPQTGLSAIQQALQELQERGFLYRAKAPRGEDPKPGAEEAVYFKTQEFGDDKDRVVQKADGSFTYLAADIAYHRDKVRRGYQRLINILGSDHHGYIGRLHAAVGAFSPDVKLEILIGQFVKLFKTDPETGEKTEVRMSKRTGNFVSLNDLIDDPEIGVGVDAARWFLLSSSMDSPINFDLDLAVKQTFDNPVVYVHYSHARCCTLLRRLQEEEKVELTNKVTLTEQQKLPYQEPEERALLLRLLALPDELIAAAEERAPHKIIRYAEAIAADFNKFYDNCRILPLLKEDPLLAQARIQLVQATRQVLFNVLTGILGLSAPESM.

The 'HIGH' region signature appears at 140-150 (ANPTGPLHVGH).

Belongs to the class-I aminoacyl-tRNA synthetase family. As to quaternary structure, monomer.

It is found in the cytoplasm. It catalyses the reaction tRNA(Arg) + L-arginine + ATP = L-arginyl-tRNA(Arg) + AMP + diphosphate. The chain is Arginine--tRNA ligase from Synechococcus sp. (strain JA-3-3Ab) (Cyanobacteria bacterium Yellowstone A-Prime).